We begin with the raw amino-acid sequence, 102 residues long: Secretoglobin family 1D member (102 aa).

The N-terminal stretch at 1–21 is a signal peptide; sequence MRLSVTALLVTLALCYYEANA. An N-linked (GlcNAc...) asparagine glycan is attached at asparagine 87.

It belongs to the secretoglobin family. Lipophilin subfamily.

The protein localises to the secreted. May bind androgens and other steroids. May be under transcriptional regulation of steroid hormones. This chain is Secretoglobin family 1D member (SCGB1D), found in Bos taurus (Bovine).